A 68-amino-acid chain; its full sequence is ATP synthase F(0) complex subunit 8 (68 aa).

Residues 8-24 form a helical membrane-spanning segment; sequence TWSITIVSMIITLFIMF. Lysine 54 is subject to N6-acetyllysine; alternate. N6-succinyllysine; alternate is present on lysine 54. Lysine 57 carries the post-translational modification N6-acetyllysine.

The protein belongs to the ATPase protein 8 family. Component of the ATP synthase complex composed at least of ATP5F1A/subunit alpha, ATP5F1B/subunit beta, ATP5MC1/subunit c (homooctomer), MT-ATP6/subunit a, MT-ATP8/subunit 8, ATP5ME/subunit e, ATP5MF/subunit f, ATP5MG/subunit g, ATP5MK/subunit k, ATP5MJ/subunit j, ATP5F1C/subunit gamma, ATP5F1D/subunit delta, ATP5F1E/subunit epsilon, ATP5PF/subunit F6, ATP5PB/subunit b, ATP5PD/subunit d, ATP5PO/subunit OSCP. ATP synthase complex consists of a soluble F(1) head domain (subunits alpha(3) and beta(3)) - the catalytic core - and a membrane F(0) domain - the membrane proton channel (subunits c, a, 8, e, f, g, k and j). These two domains are linked by a central stalk (subunits gamma, delta, and epsilon) rotating inside the F1 region and a stationary peripheral stalk (subunits F6, b, d, and OSCP). Interacts with PRICKLE3.

Its subcellular location is the mitochondrion membrane. In terms of biological role, subunit 8, of the mitochondrial membrane ATP synthase complex (F(1)F(0) ATP synthase or Complex V) that produces ATP from ADP in the presence of a proton gradient across the membrane which is generated by electron transport complexes of the respiratory chain. ATP synthase complex consist of a soluble F(1) head domain - the catalytic core - and a membrane F(1) domain - the membrane proton channel. These two domains are linked by a central stalk rotating inside the F(1) region and a stationary peripheral stalk. During catalysis, ATP synthesis in the catalytic domain of F(1) is coupled via a rotary mechanism of the central stalk subunits to proton translocation. In vivo, can only synthesize ATP although its ATP hydrolase activity can be activated artificially in vitro. Part of the complex F(0) domain. The chain is ATP synthase F(0) complex subunit 8 from Ceratotherium simum (White rhinoceros).